Consider the following 341-residue polypeptide: tRNA N6-adenosine threonylcarbamoyltransferase (341 aa).

Fe cation-binding residues include His-111 and His-115. Substrate-binding positions include 134 to 138, Asp-167, Gly-180, and Asn-276; that span reads LVSGG. Position 304 (Asp-304) interacts with Fe cation.

Belongs to the KAE1 / TsaD family. It depends on Fe(2+) as a cofactor.

It localises to the cytoplasm. The enzyme catalyses L-threonylcarbamoyladenylate + adenosine(37) in tRNA = N(6)-L-threonylcarbamoyladenosine(37) in tRNA + AMP + H(+). Required for the formation of a threonylcarbamoyl group on adenosine at position 37 (t(6)A37) in tRNAs that read codons beginning with adenine. Is involved in the transfer of the threonylcarbamoyl moiety of threonylcarbamoyl-AMP (TC-AMP) to the N6 group of A37, together with TsaE and TsaB. TsaD likely plays a direct catalytic role in this reaction. The protein is tRNA N6-adenosine threonylcarbamoyltransferase of Ectopseudomonas mendocina (strain ymp) (Pseudomonas mendocina).